The sequence spans 384 residues: Lipid-A-disaccharide synthase (384 aa).

The protein belongs to the LpxB family.

The enzyme catalyses a lipid X + a UDP-2-N,3-O-bis[(3R)-3-hydroxyacyl]-alpha-D-glucosamine = a lipid A disaccharide + UDP + H(+). It participates in bacterial outer membrane biogenesis; LPS lipid A biosynthesis. Its function is as follows. Condensation of UDP-2,3-diacylglucosamine and 2,3-diacylglucosamine-1-phosphate to form lipid A disaccharide, a precursor of lipid A, a phosphorylated glycolipid that anchors the lipopolysaccharide to the outer membrane of the cell. The chain is Lipid-A-disaccharide synthase from Geobacter sulfurreducens (strain ATCC 51573 / DSM 12127 / PCA).